The sequence spans 348 residues: Protein RecA (348 aa).

Residue 68–75 participates in ATP binding; it reads GPESSGKT.

It belongs to the RecA family.

It localises to the cytoplasm. Functionally, can catalyze the hydrolysis of ATP in the presence of single-stranded DNA, the ATP-dependent uptake of single-stranded DNA by duplex DNA, and the ATP-dependent hybridization of homologous single-stranded DNAs. It interacts with LexA causing its activation and leading to its autocatalytic cleavage. This Rhodococcus opacus (strain B4) protein is Protein RecA.